Consider the following 362-residue polypeptide: MDLGSREAFDRTGTLGIEEEFFVVDEYGRPTAGTDELVYENEPPEPLKDRLDHELFKCVIETQTPTIGSLSAADDALAEVRKALVSHAETHGFGIAAAGLHPAAKWRELDHAEKPRYRAQLDRIQYPQHRNTTAGLHIHVGVDDADKAVWVANELRWYMPVMLALSANSPYWNGFDTGLQSARAKIFEALPNTGMPTAFEDFESFQSFERTMVETGSINDRGELWYDVRPHSEHGTVEVRTPDGQADPDHVLAFVEYTQALVEDLSARYEDGESGANHRRELLDENKWRALRHGHDAELLDRSLEESVPLGELVESECQRLGVSGIRDVYEAESGAEKQRRLLESEGMDALCGSLSVEWDSS.

Belongs to the glutamate--cysteine ligase type 2 family. YbdK subfamily.

The enzyme catalyses L-cysteine + L-glutamate + ATP = gamma-L-glutamyl-L-cysteine + ADP + phosphate + H(+). Functionally, catalyzes the synthesis of gamma-glutamylcysteine (gamma-GC), the main low-molecular-weight thiol compound instead of glutathione in halophilic archaea. This is Glutamate--cysteine ligase from Natronomonas pharaonis (strain ATCC 35678 / DSM 2160 / CIP 103997 / JCM 8858 / NBRC 14720 / NCIMB 2260 / Gabara) (Halobacterium pharaonis).